A 345-amino-acid chain; its full sequence is 3-isopropylmalate dehydrogenase (345 aa).

74–87 (GPKWDGLPRKIRPE) contributes to the NAD(+) binding site. Positions 94, 104, 132, and 217 each coordinate substrate. Residues Asp217, Asp241, and Asp245 each coordinate Mg(2+). An NAD(+)-binding site is contributed by 274–286 (GSAPDIAGKGLAN).

The protein belongs to the isocitrate and isopropylmalate dehydrogenases family. LeuB type 1 subfamily. Homodimer. Mg(2+) serves as cofactor. Mn(2+) is required as a cofactor.

It is found in the cytoplasm. It carries out the reaction (2R,3S)-3-isopropylmalate + NAD(+) = 4-methyl-2-oxopentanoate + CO2 + NADH. Its pathway is amino-acid biosynthesis; L-leucine biosynthesis; L-leucine from 3-methyl-2-oxobutanoate: step 3/4. Catalyzes the oxidation of 3-carboxy-2-hydroxy-4-methylpentanoate (3-isopropylmalate) to 3-carboxy-4-methyl-2-oxopentanoate. The product decarboxylates to 4-methyl-2 oxopentanoate. The sequence is that of 3-isopropylmalate dehydrogenase (leuB) from Thermus thermophilus (strain ATCC BAA-163 / DSM 7039 / HB27).